The following is a 255-amino-acid chain: 3-dehydroquinate dehydratase (255 aa).

3-dehydroquinate-binding positions include 47-49 (EWR) and Arg-83. His-144 functions as the Proton donor/acceptor in the catalytic mechanism. Lys-171 acts as the Schiff-base intermediate with substrate in catalysis. 3-dehydroquinate contacts are provided by Arg-214, Ser-233, and Gln-237.

The protein belongs to the type-I 3-dehydroquinase family. Homodimer.

The enzyme catalyses 3-dehydroquinate = 3-dehydroshikimate + H2O. Its pathway is metabolic intermediate biosynthesis; chorismate biosynthesis; chorismate from D-erythrose 4-phosphate and phosphoenolpyruvate: step 3/7. Functionally, involved in the third step of the chorismate pathway, which leads to the biosynthesis of aromatic amino acids. Catalyzes the cis-dehydration of 3-dehydroquinate (DHQ) and introduces the first double bond of the aromatic ring to yield 3-dehydroshikimate. The polypeptide is 3-dehydroquinate dehydratase (Alkaliphilus oremlandii (strain OhILAs) (Clostridium oremlandii (strain OhILAs))).